Here is a 352-residue protein sequence, read N- to C-terminus: DNA polymerase IV (352 aa).

Positions isoleucine 6–glycine 187 constitute a UmuC domain. The Mg(2+) site is built by aspartate 10 and aspartate 105. Glutamate 106 is an active-site residue.

It belongs to the DNA polymerase type-Y family. In terms of assembly, monomer. The cofactor is Mg(2+).

The protein resides in the cytoplasm. It carries out the reaction DNA(n) + a 2'-deoxyribonucleoside 5'-triphosphate = DNA(n+1) + diphosphate. Its function is as follows. Poorly processive, error-prone DNA polymerase involved in untargeted mutagenesis. Copies undamaged DNA at stalled replication forks, which arise in vivo from mismatched or misaligned primer ends. These misaligned primers can be extended by PolIV. Exhibits no 3'-5' exonuclease (proofreading) activity. May be involved in translesional synthesis, in conjunction with the beta clamp from PolIII. This chain is DNA polymerase IV, found in Ectopseudomonas mendocina (strain ymp) (Pseudomonas mendocina).